The sequence spans 323 residues: Cytochrome c biogenesis protein CcsA (323 aa).

The next 8 membrane-spanning stretches (helical) occupy residues 9 to 29 (ILTH…LITL), 37 to 57 (LYVS…GLLV), 71 to 91 (LYES…FTYF), 100 to 120 (VSAI…SGFL), 145 to 165 (MVLG…LIVI), 227 to 247 (IISL…VWAN), 261 to 275 (TWAF…IYLH), and 288 to 308 (AIVA…VNLL).

Belongs to the CcmF/CycK/Ccl1/NrfE/CcsA family. In terms of assembly, may interact with Ccs1.

The protein resides in the plastid. Its subcellular location is the chloroplast thylakoid membrane. In terms of biological role, required during biogenesis of c-type cytochromes (cytochrome c6 and cytochrome f) at the step of heme attachment. The chain is Cytochrome c biogenesis protein CcsA from Cucumis sativus (Cucumber).